A 258-amino-acid chain; its full sequence is Polysialic acid transport protein KpsM (258 aa).

Positions 30–251 (LGYLWAILEP…FIGLALYRTR (222 aa)) constitute an ABC transmembrane type-2 domain. Transmembrane regions (helical) follow at residues 33–53 (LWAI…FGYI), 61–81 (ISFP…SSIS), 110–130 (ALLE…IVWM), 144–164 (VLTW…FMVV), 175–195 (LPIL…LHSI), and 227–247 (GVSL…GLAL).

It belongs to the ABC-2 integral membrane protein family.

The protein localises to the cell inner membrane. In terms of biological role, kpsM and KpsT constitute a system for the transport of polysialic acid across the cytoplasmic membrane. The protein is Polysialic acid transport protein KpsM (kpsM) of Escherichia coli.